A 115-amino-acid chain; its full sequence is Ribonuclease P protein component (115 aa).

It belongs to the RnpA family. As to quaternary structure, consists of a catalytic RNA component (M1 or rnpB) and a protein subunit.

It carries out the reaction Endonucleolytic cleavage of RNA, removing 5'-extranucleotides from tRNA precursor.. Its function is as follows. RNaseP catalyzes the removal of the 5'-leader sequence from pre-tRNA to produce the mature 5'-terminus. It can also cleave other RNA substrates such as 4.5S RNA. The protein component plays an auxiliary but essential role in vivo by binding to the 5'-leader sequence and broadening the substrate specificity of the ribozyme. The protein is Ribonuclease P protein component of Natranaerobius thermophilus (strain ATCC BAA-1301 / DSM 18059 / JW/NM-WN-LF).